Reading from the N-terminus, the 118-residue chain is Large ribosomal subunit protein bL19 (118 aa).

The protein belongs to the bacterial ribosomal protein bL19 family.

In terms of biological role, this protein is located at the 30S-50S ribosomal subunit interface and may play a role in the structure and function of the aminoacyl-tRNA binding site. This is Large ribosomal subunit protein bL19 from Helicobacter pylori (strain P12).